We begin with the raw amino-acid sequence, 374 residues long: Pectate lyase 3 (374 aa).

An N-terminal signal peptide occupies residues 1-22 (MKYLLPSAAAGLLLLAAQPTMA). C93 and C176 are disulfide-bonded. Ca(2+) contacts are provided by D150, D152, E187, and D191. R239 is a catalytic residue. A disulfide bridge connects residues C350 and C373.

Belongs to the polysaccharide lyase 1 family. PLADES subfamily. Requires Ca(2+) as cofactor.

It is found in the secreted. The enzyme catalyses Eliminative cleavage of (1-&gt;4)-alpha-D-galacturonan to give oligosaccharides with 4-deoxy-alpha-D-galact-4-enuronosyl groups at their non-reducing ends.. It functions in the pathway glycan metabolism; pectin degradation; 2-dehydro-3-deoxy-D-gluconate from pectin: step 2/5. Its function is as follows. Involved in maceration and soft-rotting of plant tissue. This Pectobacterium carotovorum subsp. carotovorum (Erwinia carotovora subsp. carotovora) protein is Pectate lyase 3 (pel3).